Consider the following 429-residue polypeptide: Enolase (429 aa).

Residue Gln163 coordinates (2R)-2-phosphoglycerate. Glu205 serves as the catalytic Proton donor. Mg(2+) is bound by residues Asp242, Glu286, and Asp313. The (2R)-2-phosphoglycerate site is built by Lys338, Arg367, Ser368, and Lys389. Lys338 functions as the Proton acceptor in the catalytic mechanism.

It belongs to the enolase family. Mg(2+) serves as cofactor.

It localises to the cytoplasm. It is found in the secreted. Its subcellular location is the cell surface. The catalysed reaction is (2R)-2-phosphoglycerate = phosphoenolpyruvate + H2O. It functions in the pathway carbohydrate degradation; glycolysis; pyruvate from D-glyceraldehyde 3-phosphate: step 4/5. Catalyzes the reversible conversion of 2-phosphoglycerate (2-PG) into phosphoenolpyruvate (PEP). It is essential for the degradation of carbohydrates via glycolysis. This is Enolase from Geobacter metallireducens (strain ATCC 53774 / DSM 7210 / GS-15).